The sequence spans 681 residues: DNA-directed RNA polymerase subunit beta' (681 aa).

4 residues coordinate Zn(2+): C69, C71, C87, and C90. Residues D489, D491, and D493 each contribute to the Mg(2+) site.

This sequence belongs to the RNA polymerase beta' chain family. RpoC1 subfamily. In plastids the minimal PEP RNA polymerase catalytic core is composed of four subunits: alpha, beta, beta', and beta''. When a (nuclear-encoded) sigma factor is associated with the core the holoenzyme is formed, which can initiate transcription. The cofactor is Mg(2+). Requires Zn(2+) as cofactor.

The protein resides in the plastid. Its subcellular location is the chloroplast. The catalysed reaction is RNA(n) + a ribonucleoside 5'-triphosphate = RNA(n+1) + diphosphate. Functionally, DNA-dependent RNA polymerase catalyzes the transcription of DNA into RNA using the four ribonucleoside triphosphates as substrates. The sequence is that of DNA-directed RNA polymerase subunit beta' from Cycas taitungensis (Prince sago).